A 618-amino-acid polypeptide reads, in one-letter code: UvrABC system protein C (618 aa).

Residues 20-98 (TAPGVYRMYA…IKSLSPRYNV (79 aa)) enclose the GIY-YIG domain. The UVR domain occupies 207–242 (DQLGEEIMHSMQQASEALEFERAARLRDLLSSLRSM).

It belongs to the UvrC family. As to quaternary structure, interacts with UvrB in an incision complex.

It is found in the cytoplasm. In terms of biological role, the UvrABC repair system catalyzes the recognition and processing of DNA lesions. UvrC both incises the 5' and 3' sides of the lesion. The N-terminal half is responsible for the 3' incision and the C-terminal half is responsible for the 5' incision. This chain is UvrABC system protein C, found in Xanthomonas campestris pv. campestris (strain 8004).